The chain runs to 374 residues: tRNA (guanine(26)-N(2))-dimethyltransferase (374 aa).

Residues 4 to 368 enclose the Trm1 methyltransferase domain; that stretch reads IEATEGTTTF…APLPVLYDAI (365 aa). Residues Arg-41, Arg-66, Asp-82, Asp-108, and Ala-109 each contribute to the S-adenosyl-L-methionine site. 4 residues coordinate Zn(2+): Cys-237, Cys-240, Cys-256, and Cys-259.

The protein belongs to the class I-like SAM-binding methyltransferase superfamily. Trm1 family.

The enzyme catalyses guanosine(26) in tRNA + 2 S-adenosyl-L-methionine = N(2)-dimethylguanosine(26) in tRNA + 2 S-adenosyl-L-homocysteine + 2 H(+). Its function is as follows. Dimethylates a single guanine residue at position 26 of a number of tRNAs using S-adenosyl-L-methionine as donor of the methyl groups. The protein is tRNA (guanine(26)-N(2))-dimethyltransferase of Methanoregula boonei (strain DSM 21154 / JCM 14090 / 6A8).